The primary structure comprises 241 residues: Ubiquinone biosynthesis O-methyltransferase (241 aa).

R46, G66, D87, and M131 together coordinate S-adenosyl-L-methionine.

It belongs to the methyltransferase superfamily. UbiG/COQ3 family.

It carries out the reaction a 3-demethylubiquinol + S-adenosyl-L-methionine = a ubiquinol + S-adenosyl-L-homocysteine + H(+). It catalyses the reaction a 3-(all-trans-polyprenyl)benzene-1,2-diol + S-adenosyl-L-methionine = a 2-methoxy-6-(all-trans-polyprenyl)phenol + S-adenosyl-L-homocysteine + H(+). It participates in cofactor biosynthesis; ubiquinone biosynthesis. Its function is as follows. O-methyltransferase that catalyzes the 2 O-methylation steps in the ubiquinone biosynthetic pathway. The chain is Ubiquinone biosynthesis O-methyltransferase from Bordetella avium (strain 197N).